The chain runs to 512 residues: Oryzalexin E synthase (512 aa).

The helical transmembrane segment at 6 to 26 (SELWMTAVATCMSLLLYLTIL) threads the bilayer. C452 provides a ligand contact to heme.

It belongs to the cytochrome P450 family. Requires heme as cofactor.

Its subcellular location is the membrane. The catalysed reaction is ent-sandaracopimaradien-3beta-ol + reduced [NADPH--hemoprotein reductase] + O2 = oryzalexin E + oxidized [NADPH--hemoprotein reductase] + H2O + H(+). Its function is as follows. Enzyme of the diterpenoid metabolism involved in the biosynthesis of the oryzalexin class of phytoalexins. Can use ent-sandaracopimaradien and syn-stemodene as substrates, but no activity with syn-stemoden-19-oic acid. Hydroxylates 3-alpha-hydroxy-ent-sandaracopimaradiene at C-9-beta, resulting in a 3-alpha,9-beta-diol corresponding to oryzalexins E. The polypeptide is Oryzalexin E synthase (Oryza sativa subsp. japonica (Rice)).